The primary structure comprises 315 residues: Homoserine kinase (315 aa).

Residue P97–T107 participates in ATP binding.

This sequence belongs to the GHMP kinase family. Homoserine kinase subfamily.

The protein resides in the cytoplasm. It catalyses the reaction L-homoserine + ATP = O-phospho-L-homoserine + ADP + H(+). It participates in amino-acid biosynthesis; L-threonine biosynthesis; L-threonine from L-aspartate: step 4/5. Functionally, catalyzes the ATP-dependent phosphorylation of L-homoserine to L-homoserine phosphate. In Parasynechococcus marenigrum (strain WH8102), this protein is Homoserine kinase.